The chain runs to 476 residues: Aspartyl/glutamyl-tRNA(Asn/Gln) amidotransferase subunit B (476 aa).

Belongs to the GatB/GatE family. GatB subfamily. As to quaternary structure, heterotrimer of A, B and C subunits.

It catalyses the reaction L-glutamyl-tRNA(Gln) + L-glutamine + ATP + H2O = L-glutaminyl-tRNA(Gln) + L-glutamate + ADP + phosphate + H(+). The catalysed reaction is L-aspartyl-tRNA(Asn) + L-glutamine + ATP + H2O = L-asparaginyl-tRNA(Asn) + L-glutamate + ADP + phosphate + 2 H(+). In terms of biological role, allows the formation of correctly charged Asn-tRNA(Asn) or Gln-tRNA(Gln) through the transamidation of misacylated Asp-tRNA(Asn) or Glu-tRNA(Gln) in organisms which lack either or both of asparaginyl-tRNA or glutaminyl-tRNA synthetases. The reaction takes place in the presence of glutamine and ATP through an activated phospho-Asp-tRNA(Asn) or phospho-Glu-tRNA(Gln). The chain is Aspartyl/glutamyl-tRNA(Asn/Gln) amidotransferase subunit B from Lacticaseibacillus paracasei (strain ATCC 334 / BCRC 17002 / CCUG 31169 / CIP 107868 / KCTC 3260 / NRRL B-441) (Lactobacillus paracasei).